The following is a 508-amino-acid chain: Probable malate:quinone oxidoreductase (508 aa).

Belongs to the MQO family. The cofactor is FAD.

The catalysed reaction is (S)-malate + a quinone = a quinol + oxaloacetate. It participates in carbohydrate metabolism; tricarboxylic acid cycle; oxaloacetate from (S)-malate (quinone route): step 1/1. This chain is Probable malate:quinone oxidoreductase, found in Chromohalobacter salexigens (strain ATCC BAA-138 / DSM 3043 / CIP 106854 / NCIMB 13768 / 1H11).